The chain runs to 316 residues: WSCD family member GA21586 (316 aa).

Residues 8-28 form a helical membrane-spanning segment; the sequence is FFGVSATIIIYIGGVLFLSMN. N-linked (GlcNAc...) asparagine glycans are attached at residues Asn78, Asn150, Asn226, and Asn232.

Belongs to the WSCD family.

The protein resides in the membrane. In Drosophila pseudoobscura pseudoobscura (Fruit fly), this protein is WSCD family member GA21586.